Consider the following 523-residue polypeptide: Cyclin-dependent kinase 17 (523 aa).

At Ser-9 the chain carries Phosphoserine. The segment at 31-55 is disordered; sequence IEESSSKDNEPIVKNGRPPTSHSMH. A phosphoserine mark is found at Ser-80, Ser-92, and Ser-105. The disordered stretch occupies residues 103-123; sequence MGSDGESDQASGTSSDEVQSP. Positions 110–123 are enriched in polar residues; it reads DQASGTSSDEVQSP. Residues Ser-137, Ser-146, Ser-165, and Ser-180 each carry the phosphoserine modification. The Protein kinase domain occupies 192-473; it reads YIKLEKLGEG…AEEAMKHVYF (282 aa). Residues 198-206 and Lys-221 contribute to the ATP site; that span reads LGEGTYATV. Catalysis depends on Asp-313, which acts as the Proton acceptor.

It belongs to the protein kinase superfamily. CMGC Ser/Thr protein kinase family. CDC2/CDKX subfamily. As to quaternary structure, found in a complex containing CABLES1, CDK16 and TDRD7. Interacts with TDRD7. In terms of tissue distribution, brain specific. Within the brain it is concentrated in the neuronal layers of the hippocampus and olfactory bulb, which mostly consist of post-mitotic neurons.

It catalyses the reaction L-seryl-[protein] + ATP = O-phospho-L-seryl-[protein] + ADP + H(+). The catalysed reaction is L-threonyl-[protein] + ATP = O-phospho-L-threonyl-[protein] + ADP + H(+). Functionally, may play a role in terminally differentiated neurons. Has a Ser/Thr-phosphorylating activity for histone H1. The protein is Cyclin-dependent kinase 17 (Cdk17) of Rattus norvegicus (Rat).